A 240-amino-acid polypeptide reads, in one-letter code: UDP-2,3-diacylglucosamine hydrolase (240 aa).

Residues aspartate 8, histidine 10, aspartate 41, asparagine 79, and histidine 114 each contribute to the Mn(2+) site. 79–80 (NR) contributes to the substrate binding site. Substrate is bound by residues aspartate 122, serine 160, asparagine 164, lysine 167, and histidine 195. Positions 195 and 197 each coordinate Mn(2+).

Belongs to the LpxH family. Mn(2+) is required as a cofactor.

Its subcellular location is the cell inner membrane. It catalyses the reaction UDP-2-N,3-O-bis[(3R)-3-hydroxytetradecanoyl]-alpha-D-glucosamine + H2O = 2-N,3-O-bis[(3R)-3-hydroxytetradecanoyl]-alpha-D-glucosaminyl 1-phosphate + UMP + 2 H(+). Its pathway is glycolipid biosynthesis; lipid IV(A) biosynthesis; lipid IV(A) from (3R)-3-hydroxytetradecanoyl-[acyl-carrier-protein] and UDP-N-acetyl-alpha-D-glucosamine: step 4/6. Its function is as follows. Hydrolyzes the pyrophosphate bond of UDP-2,3-diacylglucosamine to yield 2,3-diacylglucosamine 1-phosphate (lipid X) and UMP by catalyzing the attack of water at the alpha-P atom. Involved in the biosynthesis of lipid A, a phosphorylated glycolipid that anchors the lipopolysaccharide to the outer membrane of the cell. In Escherichia coli O17:K52:H18 (strain UMN026 / ExPEC), this protein is UDP-2,3-diacylglucosamine hydrolase.